The following is a 338-amino-acid chain: Cinnamoyl-CoA reductase 1 (338 aa).

Residues 22–28 (GAGGFIG), arginine 47, lysine 53, 73–74 (DV), 93–95 (VAS), tyrosine 165, lysine 169, 192–195 (PSMT), and serine 207 each bind NADP(+). Cysteine 158 and cysteine 166 are oxidised to a cystine. The active-site Proton donor is the lysine 169.

It belongs to the NAD(P)-dependent epimerase/dehydratase family. Dihydroflavonol-4-reductase subfamily. Interacts with RAC1 in a GTP-dependent manner.

It is found in the cytoplasm. It carries out the reaction (E)-cinnamaldehyde + NADP(+) + CoA = (E)-cinnamoyl-CoA + NADPH + H(+). Its pathway is aromatic compound metabolism; phenylpropanoid biosynthesis. Activated by the small GTPase RAC1. Functionally, involved in the latter stages of lignin biosynthesis. Catalyzes one of the last steps of monolignol biosynthesis, the conversion of cinnamoyl-CoAs into their corresponding cinnamaldehydes. Probably involved in the formation of lignin in defense responses. The sequence is that of Cinnamoyl-CoA reductase 1 from Oryza sativa subsp. japonica (Rice).